The following is a 44-amino-acid chain: Thaumatin-like protein 5 (44 aa).

Belongs to the thaumatin family.

The polypeptide is Thaumatin-like protein 5 (Glebionis coronaria (Crown daisy)).